The chain runs to 313 residues: Olfactory receptor 4M1 (313 aa).

The Extracellular portion of the chain corresponds to 1 to 25 (MEPANDTTVTEFILTGLSQTREVQL). The N-linked (GlcNAc...) asparagine glycan is linked to Asn-5. A helical transmembrane segment spans residues 26-46 (VLFVIFLSFYLFILPVNILII). Residues 47–57 (CTIRLDSHLSS) lie on the Cytoplasmic side of the membrane. The chain crosses the membrane as a helical span at residues 58–78 (PMYFLLANLAFLDIWYSSITA). Topologically, residues 79-97 (PKMLVDFFVERKIISFGGC) are extracellular. A disulfide bridge links Cys-97 with Cys-179. A helical membrane pass occupies residues 98 to 118 (IAQLFFLHFVGASEMFLLTVM). Residues 119–142 (AFDRYAAICRPLHYATIMNRRLCC) lie on the Cytoplasmic side of the membrane. The chain crosses the membrane as a helical span at residues 143-163 (ILVALSWTGGFVHSIIQVALI). The Extracellular segment spans residues 164-204 (VRLPFCGPNELDNYFCDITQVVRIACANTFLEEMVMIFSSG). Residues 205-225 (LISVVCFIALLMSYAFLLTML) traverse the membrane as a helical segment. The Cytoplasmic segment spans residues 226–238 (KKHSSSGESTSRA). A helical transmembrane segment spans residues 239–259 (ISTCYSHITIVVLMFGPSIYI). Over 260–270 (YARPFDSFSLD) the chain is Extracellular. Residues 271–291 (KVVSVFHTVIFPLLNPIIYTL) traverse the membrane as a helical segment. Over 292–313 (RNKEVKAAMRKLVNRYIFCKEK) the chain is Cytoplasmic.

The protein belongs to the G-protein coupled receptor 1 family. In terms of tissue distribution, highly expressed in liver but not in adipose tissue. Also expressed at high level in testis.

It localises to the cell membrane. Its function is as follows. Olfactory receptor that acts as a receptor of Asprosin hormone at the surface of hepatocytes to promote hepatocyte glucose release. Also binds Asprosin in the arcuate nucleus of the hypothalamus, thereby stimulating appetite by promoting orexigenic AgRP neuronal activity. In testis, Asprosin-binding promotes sperm progressive motility and enhances male fertility. The activity of this receptor is mediated by G proteins which activate adenylyl cyclase, resulting in an elevation of intracellular cAMP. This Mus musculus (Mouse) protein is Olfactory receptor 4M1.